Reading from the N-terminus, the 226-residue chain is MNQSPTWHDVIGEEKKQSYFVDTLNFVEAERAAGKAIYPPAKDVFNAFRFTEFNDVKVVILGQDPYHGPNQAHGLCFSVLPGIKTPPSLVNMYKELAQDIEGFQIPQHGFLQSWAEQGVLLLNTVLTVEQGKAHSHSKTGWETFTDRVIEAINQHQHGVVFLLWGSHAQKKGRFIDRSKHHVLAAPHPSPLSAHRGFLGCKHFSQANQLLASQGKEPINWHLPLTV.

Asp-64 acts as the Proton acceptor in catalysis.

It belongs to the uracil-DNA glycosylase (UDG) superfamily. UNG family.

The protein resides in the cytoplasm. The catalysed reaction is Hydrolyzes single-stranded DNA or mismatched double-stranded DNA and polynucleotides, releasing free uracil.. Excises uracil residues from the DNA which can arise as a result of misincorporation of dUMP residues by DNA polymerase or due to deamination of cytosine. In Vibrio parahaemolyticus serotype O3:K6 (strain RIMD 2210633), this protein is Uracil-DNA glycosylase.